Here is a 233-residue protein sequence, read N- to C-terminus: Ribosomal RNA small subunit methyltransferase G (233 aa).

S-adenosyl-L-methionine-binding positions include Gly96, Leu101, 146-147 (LE), and Arg160.

Belongs to the methyltransferase superfamily. RNA methyltransferase RsmG family.

Its subcellular location is the cytoplasm. It carries out the reaction guanosine(527) in 16S rRNA + S-adenosyl-L-methionine = N(7)-methylguanosine(527) in 16S rRNA + S-adenosyl-L-homocysteine. Functionally, specifically methylates the N7 position of guanine in position 527 of 16S rRNA. The chain is Ribosomal RNA small subunit methyltransferase G from Sphingopyxis alaskensis (strain DSM 13593 / LMG 18877 / RB2256) (Sphingomonas alaskensis).